Consider the following 117-residue polypeptide: Protein RALF-like 32 (117 aa).

The N-terminal stretch at 1–26 is a signal peptide; the sequence is MEIKPSRIFSTITIFFLCLLLAHVTS. Positions 27-64 are cleaved as a propeptide — removed in mature form; the sequence is KASSSSLCNGSVAECSSMVETEEMSVIMESWSSQRLTE. N-linked (GlcNAc...) asparagine glycosylation is present at asparagine 35. The segment at 77-107 is disordered; that stretch reads RNQPACDGGKRGESYSTQCLPPPSNPYSRGC. Cystine bridges form between cysteine 82–cysteine 95 and cysteine 107–cysteine 113.

It belongs to the plant rapid alkalinization factor (RALF) family. Post-translationally, proteolytically cleaved, probably by S1P, a subtilisin-like serine protease (subtilase).

It is found in the secreted. Cell signaling peptide that may regulate plant stress, growth, and development. Mediates a rapid alkalinization of extracellular space by mediating a transient increase in the cytoplasmic Ca(2+) concentration leading to a calcium-dependent signaling events through a cell surface receptor and a concomitant activation of some intracellular mitogen-activated protein kinases. The sequence is that of Protein RALF-like 32 (RALFL32) from Arabidopsis thaliana (Mouse-ear cress).